The chain runs to 137 residues: ATP synthase epsilon chain, sodium ion specific (137 aa).

The protein belongs to the ATPase epsilon chain family. F-type ATPases have 2 components, CF(1) - the catalytic core - and CF(0) - the membrane proton channel. CF(1) has five subunits: alpha(3), beta(3), gamma(1), delta(1), epsilon(1). CF(0) has three main subunits: a, b and c.

It is found in the cell inner membrane. Its function is as follows. Produces ATP from ADP in the presence of a sodium gradient across the membrane. The protein is ATP synthase epsilon chain, sodium ion specific (atpC) of Propionigenium modestum.